The chain runs to 88 residues: Large ribosomal subunit protein eL34 (88 aa).

The interval 41–72 (RPLNGIPRGRPNELRKLPKTKKRPERPMPNLC) is disordered.

It belongs to the eukaryotic ribosomal protein eL34 family.

In Thermococcus sibiricus (strain DSM 12597 / MM 739), this protein is Large ribosomal subunit protein eL34.